The primary structure comprises 524 residues: Tubulin-specific chaperone E (524 aa).

S2 bears the N-acetylserine mark. A CAP-Gly domain is found at G27–R71. 7 LRR repeats span residues N154–A175, D180–T201, T206–P227, V231–Q253, K254–A275, R279–I300, and A309–D330. In terms of domain architecture, LRRCT spans N343–D381. K460 is modified (N6-acetyllysine). Residue S492 is modified to Phosphoserine.

It belongs to the TBCE family. In terms of assembly, supercomplex made of cofactors A to E. Cofactors A and D function by capturing and stabilizing tubulin in a quasi-native conformation. Cofactor E binds to the cofactor D-tubulin complex; interaction with cofactor C then causes the release of tubulin polypeptides that are committed to the native state. Cofactors B and E can form a heterodimer which binds to alpha-tubulin and enhances their ability to dissociate tubulin heterodimers. Interacts with TBCD. As to expression, ubiquitously expressed.

The protein resides in the cytoplasm. The protein localises to the cytoskeleton. Its function is as follows. Tubulin-folding protein; involved in the second step of the tubulin folding pathway and in the regulation of tubulin heterodimer dissociation. Required for correct organization of microtubule cytoskeleton and mitotic splindle, and maintenance of the neuronal microtubule network. The chain is Tubulin-specific chaperone E (Tbce) from Mus musculus (Mouse).